Here is a 311-residue protein sequence, read N- to C-terminus: Ribosomal RNA small subunit methyltransferase H (311 aa).

S-adenosyl-L-methionine-binding positions include 32–34, Asp52, Phe79, Asp100, and Gln107; that span reads AGH.

Belongs to the methyltransferase superfamily. RsmH family.

It localises to the cytoplasm. The enzyme catalyses cytidine(1402) in 16S rRNA + S-adenosyl-L-methionine = N(4)-methylcytidine(1402) in 16S rRNA + S-adenosyl-L-homocysteine + H(+). Specifically methylates the N4 position of cytidine in position 1402 (C1402) of 16S rRNA. The protein is Ribosomal RNA small subunit methyltransferase H of Staphylococcus aureus (strain Mu3 / ATCC 700698).